A 594-amino-acid polypeptide reads, in one-letter code: UvrABC system protein C (594 aa).

The 87-residue stretch at 13-99 folds into the GIY-YIG domain; that stretch reads NSSGVYQYFD…IKQLKPKYNI (87 aa). Positions 205–240 constitute a UVR domain; it reads DRLIKELELKMERLSNNLRFEEALIYRDRIAKIQKI.

The protein belongs to the UvrC family. Interacts with UvrB in an incision complex.

It localises to the cytoplasm. Its function is as follows. The UvrABC repair system catalyzes the recognition and processing of DNA lesions. UvrC both incises the 5' and 3' sides of the lesion. The N-terminal half is responsible for the 3' incision and the C-terminal half is responsible for the 5' incision. The sequence is that of UvrABC system protein C from Helicobacter pylori (strain ATCC 700392 / 26695) (Campylobacter pylori).